Here is a 273-residue protein sequence, read N- to C-terminus: Putative phosphoenolpyruvate synthase regulatory protein (273 aa).

Residue 154-161 (GVSRSGKT) participates in ADP binding.

The protein belongs to the pyruvate, phosphate/water dikinase regulatory protein family. PSRP subfamily.

The catalysed reaction is [pyruvate, water dikinase] + ADP = [pyruvate, water dikinase]-phosphate + AMP + H(+). It catalyses the reaction [pyruvate, water dikinase]-phosphate + phosphate + H(+) = [pyruvate, water dikinase] + diphosphate. Functionally, bifunctional serine/threonine kinase and phosphorylase involved in the regulation of the phosphoenolpyruvate synthase (PEPS) by catalyzing its phosphorylation/dephosphorylation. In Neisseria meningitidis serogroup C (strain 053442), this protein is Putative phosphoenolpyruvate synthase regulatory protein.